A 344-amino-acid polypeptide reads, in one-letter code: N-acetyl-gamma-glutamyl-phosphate reductase (344 aa).

The active site involves C150.

Belongs to the NAGSA dehydrogenase family. Type 1 subfamily.

Its subcellular location is the cytoplasm. The enzyme catalyses N-acetyl-L-glutamate 5-semialdehyde + phosphate + NADP(+) = N-acetyl-L-glutamyl 5-phosphate + NADPH + H(+). The protein operates within amino-acid biosynthesis; L-arginine biosynthesis; N(2)-acetyl-L-ornithine from L-glutamate: step 3/4. Its function is as follows. Catalyzes the NADPH-dependent reduction of N-acetyl-5-glutamyl phosphate to yield N-acetyl-L-glutamate 5-semialdehyde. The sequence is that of N-acetyl-gamma-glutamyl-phosphate reductase from Pseudomonas paraeruginosa (strain DSM 24068 / PA7) (Pseudomonas aeruginosa (strain PA7)).